The chain runs to 397 residues: Digeranylgeranylglycerophospholipid reductase (397 aa).

Residues Ala15, Glu34, Cys45, Gly46, Gly48, Arg101, Ala125, Glu163, Asp284, Gly296, and Ile297 each contribute to the FAD site. Lys339 and Val375 together coordinate a 2,3-bis-O-(geranylgeranyl)-sn-glycerol 1-phospholipid.

Belongs to the geranylgeranyl reductase family. DGGGPL reductase subfamily. Requires FAD as cofactor.

It catalyses the reaction 2,3-bis-O-(phytanyl)-sn-glycerol 1-phosphate + 8 NADP(+) = 2,3-bis-O-(geranylgeranyl)-sn-glycerol 1-phosphate + 8 NADPH + 8 H(+). The enzyme catalyses 2,3-bis-O-(phytanyl)-sn-glycerol 1-phosphate + 8 NAD(+) = 2,3-bis-O-(geranylgeranyl)-sn-glycerol 1-phosphate + 8 NADH + 8 H(+). It carries out the reaction a 2,3-bis-O-phytanyl-sn-glycerol 1-phospholipid + 8 A = a 2,3-bis-O-(geranylgeranyl)-sn-glycerol 1-phospholipid + 8 AH2. The catalysed reaction is CDP-2,3-bis-O-(geranylgeranyl)-sn-glycerol + 8 AH2 = CDP-2,3-bis-O-(phytanyl)-sn-glycerol + 8 A. It catalyses the reaction archaetidylserine + 8 AH2 = 2,3-bis-O-phytanyl-sn-glycero-3-phospho-L-serine + 8 A. The protein operates within membrane lipid metabolism; glycerophospholipid metabolism. Its function is as follows. Is involved in the reduction of 2,3-digeranylgeranylglycerophospholipids (unsaturated archaeols) into 2,3-diphytanylglycerophospholipids (saturated archaeols) in the biosynthesis of archaeal membrane lipids. Catalyzes the formation of archaetidic acid (2,3-di-O-phytanyl-sn-glyceryl phosphate) from 2,3-di-O-geranylgeranylglyceryl phosphate (DGGGP) via the hydrogenation of each double bond of the isoprenoid chains. Is also probably able to reduce double bonds of geranyl groups in CDP-2,3-bis-O-(geranylgeranyl)-sn-glycerol and archaetidylserine, thus acting at various stages in the biosynthesis of archaeal membrane lipids. This is Digeranylgeranylglycerophospholipid reductase from Picrophilus torridus (strain ATCC 700027 / DSM 9790 / JCM 10055 / NBRC 100828 / KAW 2/3).